A 547-amino-acid polypeptide reads, in one-letter code: Zinc metalloproteinase-disintegrin-like BjussuMP-1 (547 aa).

Positions 1–133 are excised as a propeptide; that stretch reads EFKVNGEPVV…KKASKLVVTA (133 aa). In terms of domain architecture, Peptidase M12B spans 141–337; it reads RYVEIVVVVD…HNPQCILNEP (197 aa). 2 residues coordinate Ca(2+): E144 and D228. 3 disulfides stabilise this stretch: C252–C332, C292–C316, and C294–C299. H277 lines the Zn(2+) pocket. E278 is a catalytic residue. 2 residues coordinate Zn(2+): H281 and H287. Positions 332, 335, 341, 344, 346, 348, 351, and 354 each coordinate Ca(2+). The region spanning 339–421 is the Disintegrin domain; sequence LTVSGNELLE…DCPRNRFHRN (83 aa). Cystine bridges form between C353–C363, C362–C385, C376–C382, C381–C406, C394–C413, C425–C437, C444–C494, C459–C501, C472–C482, C489–C526, and C520–C531. N451 is a glycosylation site (N-linked (GlcNAc...) asparagine). A glycan (N-linked (GlcNAc...) asparagine) is linked at N504.

This sequence belongs to the venom metalloproteinase (M12B) family. P-III subfamily. P-IIIa sub-subfamily. As to quaternary structure, monomer. Requires Zn(2+) as cofactor. As to expression, expressed by the venom gland.

It is found in the secreted. Completely inhibited by EDTA, EGTA, 1,10-phenanthroline, and partially by beta-mercaptoethanol. Is not inhibited by aprotinin and leupeptin. This protein is a zinc metalloprotease from snake venom that causes hemorrhage in mice after intradermal injection. It inhibits platelet aggregation induced by collagen and ADP. Has moderate edema activity, but no myotoxic activity. It hydrolyzes the Aalpha-chain and more slowly the Bbeta-chain of fibrinogen, without affecting the gamma-chains. It also shows proteolytic activity on casein. It is unable to clot plasma. It also shows bactericidal activity against E.coli and S.aureus. The protein is Zinc metalloproteinase-disintegrin-like BjussuMP-1 of Bothrops jararacussu (Jararacussu).